A 416-amino-acid chain; its full sequence is Protein MID1-COMPLEMENTING ACTIVITY 2 (416 aa).

A coiled-coil region spans residues 191-219 (CEALKTEEEKLQLELQRSRARYDADQCEV). The helical transmembrane segment at 338–354 (LIVYSLILSCCCYTCCI) threads the bilayer.

Expressed in roots, leaves, stems, flowers and siliques. In the root, high levels of expression in vascular tissues, in the stele and endodermis, but no expression in the cortex, epidermis, root cap, promeristem and adjacent elongation zone of the primary root. Not expressed in root hairs. Detected in shoot apical meristem, leaf mesophyll cells and vascular tissues, upper half of inflorescence, but not in petioles of rosette leaves.

It is found in the cell membrane. Inhibited by GdCl(3), but not by verapamil. Functionally, calcium-permeable stretch-activated channel component. Probably involved in mechanosensing and in mechano-stimulated calcium uptake mechanism. The sequence is that of Protein MID1-COMPLEMENTING ACTIVITY 2 (MCA2) from Arabidopsis thaliana (Mouse-ear cress).